Consider the following 305-residue polypeptide: tRNA dimethylallyltransferase (305 aa).

Residue 9–16 coordinates ATP; that stretch reads GPTASGKT. 11–16 provides a ligand contact to substrate; the sequence is TASGKT. Interaction with substrate tRNA regions lie at residues 34 to 37, 158 to 162, and 239 to 244; these read DSAL, QRLSR, and RCVGYR.

Belongs to the IPP transferase family. As to quaternary structure, monomer. Mg(2+) serves as cofactor.

It carries out the reaction adenosine(37) in tRNA + dimethylallyl diphosphate = N(6)-dimethylallyladenosine(37) in tRNA + diphosphate. Its function is as follows. Catalyzes the transfer of a dimethylallyl group onto the adenine at position 37 in tRNAs that read codons beginning with uridine, leading to the formation of N6-(dimethylallyl)adenosine (i(6)A). This is tRNA dimethylallyltransferase from Aeromonas hydrophila subsp. hydrophila (strain ATCC 7966 / DSM 30187 / BCRC 13018 / CCUG 14551 / JCM 1027 / KCTC 2358 / NCIMB 9240 / NCTC 8049).